A 514-amino-acid polypeptide reads, in one-letter code: Maturase K (514 aa).

This sequence belongs to the intron maturase 2 family. MatK subfamily.

It is found in the plastid. Its subcellular location is the chloroplast. In terms of biological role, usually encoded in the trnK tRNA gene intron. Probably assists in splicing its own and other chloroplast group II introns. This chain is Maturase K, found in Drosophyllum lusitanicum (Portuguese sundew).